The following is a 90-amino-acid chain: Putative regulatory protein NT01CX_2250 (90 aa).

The protein belongs to the RemA family.

This Clostridium novyi (strain NT) protein is Putative regulatory protein NT01CX_2250.